The sequence spans 825 residues: Probable ATP-dependent RNA helicase DDX20 (825 aa).

Positions 27 to 50 (PVQAVEPTPASPWTQRTAHDIGGP) are disordered. The short motif at 63–91 (ADFESLLLSRPVLEGLRAAGFERPSPVQL) is the Q motif element. ATP-binding positions include arginine 85, glutamine 90, 107-114 (AKSGTGKT), and 110-115 (GTGKTC). The Helicase ATP-binding domain occupies 94–265 (IPLGRCGLDL…TRYMRDPTFV (172 aa)). Phosphoserine is present on serine 188. Positions 212–215 (DEAD) match the DEAD box motif. At serine 270 the chain carries Phosphoserine. The Helicase C-terminal domain occupies 300–449 (HLQELFSKVP…PIPPGLMEEC (150 aa)). 2 stretches are compositionally biased toward polar residues: residues 465 to 475 (SPTVATQSPKK) and 484 to 504 (FQSQ…SASA). Disordered stretches follow at residues 465 to 573 (SPTV…PGSL) and 642 to 753 (QMLV…EPQE). A phosphoserine mark is found at serine 472, serine 501, and serine 506. Over residues 508–518 (RPKHSKPKLPV) the composition is skewed to basic residues. Residues 547–571 (KNSVQTSVEDSSSNSQHQAKDSSPG) show a composition bias toward polar residues. Threonine 552 carries the post-translational modification Phosphothreonine. Phosphoserine occurs at positions 561, 653, 655, 657, 673, 678, and 679. Over residues 646-668 (SSSQSGDSESDSDSCSSRTSSQS) the composition is skewed to low complexity. Residues threonine 689 and threonine 706 each carry the phosphothreonine modification. Residues 698–711 (EQVQNGNDTPTQVE) are compositionally biased toward polar residues. The span at 733–744 (KQSRRNPARRSS) shows a compositional bias: basic residues.

Belongs to the DEAD box helicase family. DDX20 subfamily. Part of the core SMN complex that contains SMN1, GEMIN2/SIP1, DDX20/GEMIN3, GEMIN4, GEMIN5, GEMIN6, GEMIN7, GEMIN8 and STRAP/UNRIP. Part of the SMN-Sm complex that contains SMN1, GEMIN2/SIP1, DDX20/GEMIN3, GEMIN4, GEMIN5, GEMIN6, GEMIN7, GEMIN8, STRAP/UNRIP and the Sm proteins SNRPB, SNRPD1, SNRPD2, SNRPD3, SNRPE, SNRPF and SNRPG. Interacts with SMN1; the interaction is direct. Interacts with GEMIN4; the interaction is direct. Interacts with GEMIN5. Interacts with SNUPN; the interaction is direct. Interacts with PPP4R2. Interacts with FOXL2. Interacts with NANOS1 and PUM2.

It is found in the cytoplasm. The protein resides in the nucleus. The protein localises to the gem. It catalyses the reaction ATP + H2O = ADP + phosphate + H(+). The catalysed reaction is a ribonucleoside 5'-triphosphate + H2O = a ribonucleoside 5'-diphosphate + phosphate + H(+). In terms of biological role, the SMN complex catalyzes the assembly of small nuclear ribonucleoproteins (snRNPs), the building blocks of the spliceosome, and thereby plays an important role in the splicing of cellular pre-mRNAs. Most spliceosomal snRNPs contain a common set of Sm proteins SNRPB, SNRPD1, SNRPD2, SNRPD3, SNRPE, SNRPF and SNRPG that assemble in a heptameric protein ring on the Sm site of the small nuclear RNA to form the core snRNP (Sm core). In the cytosol, the Sm proteins SNRPD1, SNRPD2, SNRPE, SNRPF and SNRPG are trapped in an inactive 6S pICln-Sm complex by the chaperone CLNS1A that controls the assembly of the core snRNP. To assemble core snRNPs, the SMN complex accepts the trapped 5Sm proteins from CLNS1A forming an intermediate. Binding of snRNA inside 5Sm triggers eviction of the SMN complex, thereby allowing binding of SNRPD3 and SNRPB to complete assembly of the core snRNP. May also play a role in the metabolism of small nucleolar ribonucleoprotein (snoRNPs). The sequence is that of Probable ATP-dependent RNA helicase DDX20 (Ddx20) from Mus musculus (Mouse).